Here is a 320-residue protein sequence, read N- to C-terminus: 4-diphosphocytidyl-2-C-methyl-D-erythritol kinase (320 aa).

Lys26 is a catalytic residue. ATP is bound at residue 111–121 (PVAGGMAGGSA). Residue Asp153 is part of the active site.

It belongs to the GHMP kinase family. IspE subfamily.

It catalyses the reaction 4-CDP-2-C-methyl-D-erythritol + ATP = 4-CDP-2-C-methyl-D-erythritol 2-phosphate + ADP + H(+). It functions in the pathway isoprenoid biosynthesis; isopentenyl diphosphate biosynthesis via DXP pathway; isopentenyl diphosphate from 1-deoxy-D-xylulose 5-phosphate: step 3/6. Catalyzes the phosphorylation of the position 2 hydroxy group of 4-diphosphocytidyl-2C-methyl-D-erythritol. This Mycobacterium marinum (strain ATCC BAA-535 / M) protein is 4-diphosphocytidyl-2-C-methyl-D-erythritol kinase.